Reading from the N-terminus, the 449-residue chain is Phosphoglucosamine mutase (449 aa).

Serine 101 serves as the catalytic Phosphoserine intermediate. Serine 101, aspartate 243, aspartate 245, and aspartate 247 together coordinate Mg(2+). Serine 101 is modified (phosphoserine).

Belongs to the phosphohexose mutase family. Requires Mg(2+) as cofactor. Activated by phosphorylation.

It catalyses the reaction alpha-D-glucosamine 1-phosphate = D-glucosamine 6-phosphate. In terms of biological role, catalyzes the conversion of glucosamine-6-phosphate to glucosamine-1-phosphate. The polypeptide is Phosphoglucosamine mutase (Syntrophus aciditrophicus (strain SB)).